The sequence spans 366 residues: Methylthioribose-1-phosphate isomerase (366 aa).

Substrate contacts are provided by residues 53-55 (RGA), R90, and Q203. The active-site Proton donor is the D244. Position 254–255 (254–255 (NK)) interacts with substrate.

Belongs to the eIF-2B alpha/beta/delta subunits family. MtnA subfamily.

It catalyses the reaction 5-(methylsulfanyl)-alpha-D-ribose 1-phosphate = 5-(methylsulfanyl)-D-ribulose 1-phosphate. It participates in amino-acid biosynthesis; L-methionine biosynthesis via salvage pathway; L-methionine from S-methyl-5-thio-alpha-D-ribose 1-phosphate: step 1/6. Its function is as follows. Catalyzes the interconversion of methylthioribose-1-phosphate (MTR-1-P) into methylthioribulose-1-phosphate (MTRu-1-P). This Methylocella silvestris (strain DSM 15510 / CIP 108128 / LMG 27833 / NCIMB 13906 / BL2) protein is Methylthioribose-1-phosphate isomerase.